We begin with the raw amino-acid sequence, 97 residues long: Co-chaperonin GroES (97 aa).

This sequence belongs to the GroES chaperonin family. In terms of assembly, heptamer of 7 subunits arranged in a ring. Interacts with the chaperonin GroEL.

Its subcellular location is the cytoplasm. Together with the chaperonin GroEL, plays an essential role in assisting protein folding. The GroEL-GroES system forms a nano-cage that allows encapsulation of the non-native substrate proteins and provides a physical environment optimized to promote and accelerate protein folding. GroES binds to the apical surface of the GroEL ring, thereby capping the opening of the GroEL channel. This Buchnera aphidicola subsp. Geoica urticularia protein is Co-chaperonin GroES.